The chain runs to 178 residues: Cytochrome b6-f complex iron-sulfur subunit (178 aa).

A helical membrane pass occupies residues 20–42; sequence LLTFGTATGVALGALYPVANYFM. Residues 65-161 enclose the Rieske domain; that stretch reads KTGWLANHQA…VDVDDDAVLV (97 aa). The [2Fe-2S] cluster site is built by C107, H109, C125, and H128. A disulfide bond links C112 and C127.

Belongs to the Rieske iron-sulfur protein family. The 4 large subunits of the cytochrome b6-f complex are cytochrome b6, subunit IV (17 kDa polypeptide, PetD), cytochrome f and the Rieske protein, while the 4 small subunits are PetG, PetL, PetM and PetN. The complex functions as a dimer. The cofactor is [2Fe-2S] cluster.

The protein resides in the cellular thylakoid membrane. The catalysed reaction is 2 oxidized [plastocyanin] + a plastoquinol + 2 H(+)(in) = 2 reduced [plastocyanin] + a plastoquinone + 4 H(+)(out). Its function is as follows. Component of the cytochrome b6-f complex, which mediates electron transfer between photosystem II (PSII) and photosystem I (PSI), cyclic electron flow around PSI, and state transitions. The protein is Cytochrome b6-f complex iron-sulfur subunit of Prochlorococcus marinus (strain MIT 9515).